We begin with the raw amino-acid sequence, 298 residues long: Trimeric intracellular cation channel type A (298 aa).

At 1–18 the chain is on the lumenal side; sequence MDLMSALSLGELALSFSR. Residues 19–39 traverse the membrane as a helical segment; the sequence is VPLFPVFDLSYFIVSIIYLKY. Residues 40 to 51 are Cytoplasmic-facing; that stretch reads EPGAVELSRRHP. A helical membrane pass occupies residues 52–72; sequence VASWLCAMLHCFGSYILADLL. Residues 73–85 lie on the Lumenal side of the membrane; sequence LGEPIIDYFSNSS. Glycine 74 is a Ca(2+) binding site. A helical transmembrane segment spans residues 86-106; that stretch reads SILLASGVWYLIFFCPLDLFY. Topologically, residues 107 to 144 are cytoplasmic; it reads KCVCFLPVKLIFVAMKEVVRVRKIAVGIHHAHHHYHHG. The a 1,2-diacyl-sn-glycero-3-phospho-(1D-myo-inositol-4,5-bisphosphate) site is built by lysine 122 and arginine 126. A helical membrane pass occupies residues 145 to 165; the sequence is WFIMIATGWVKGSGVALLSNV. The Lumenal portion of the chain corresponds to 166–178; the sequence is EQLLRGVWKPETN. The chain crosses the membrane as a helical span at residues 179–199; it reads EILHMSFPTKASLYGAILFTL. Residues 200 to 209 are Cytoplasmic-facing; that stretch reads QQTRWLPVSK. The chain crosses the membrane as a helical span at residues 210–230; sequence ASLIFVFTMFMVSCKVFLTAT. Residues 231–234 lie on the Lumenal side of the membrane; the sequence is HSHS. Residues 235–255 form a helical membrane-spanning segment; sequence SPFDILEGYICPVLFGATWGG. The Cytoplasmic portion of the chain corresponds to 256–298; that stretch reads DHHHDNHGAPHGMGLGTQHSGLPAKAKEELGEGSRKKKTKKAD. The disordered stretch occupies residues 260–298; sequence DNHGAPHGMGLGTQHSGLPAKAKEELGEGSRKKKTKKAD. The segment covering 280 to 289 has biased composition (basic and acidic residues); sequence KAKEELGEGS.

The protein belongs to the TMEM38 family. Homotrimer; conformation seems to be controled by binding to diacylglycerol (DAG). As to expression, expressed at high levels in heart and striated muscle. Also detected in brain, lung and kidney.

It is found in the sarcoplasmic reticulum membrane. It localises to the nucleus membrane. It carries out the reaction K(+)(in) = K(+)(out). With respect to regulation, channel activity is activated by a change of voltage within the sarcoplasmic reticulum lumen and blocked by luminal high Ca(2+) levels. Intracellular monovalent cation channel required for maintenance of rapid intracellular calcium release. Acts as a potassium counter-ion channel that functions in synchronization with calcium release from intracellular stores. Opened by a change of voltage within the sarcoplasmic reticulum lumen. The protein is Trimeric intracellular cation channel type A (Tmem38a) of Mus musculus (Mouse).